The sequence spans 171 residues: Neudesin (171 aa).

An N-terminal signal peptide occupies residues 1–30 (MARPAPWWWLRPLAALALALALVRVPSARA). The 86-residue stretch at 43–128 (VRLFTEEELA…KELEALDDIF (86 aa)) folds into the Cytochrome b5 heme-binding domain. N6-acetyllysine is present on Lys-135. The disordered stretch occupies residues 151–171 (GSPNLDFKPEDQPHFDIKDEF). The span at 157 to 171 (FKPEDQPHFDIKDEF) shows a compositional bias: basic and acidic residues.

It belongs to the cytochrome b5 family. MAPR subfamily. Interacts with PINK1 and PARK7.

The protein resides in the secreted. It is found in the extracellular space. It localises to the mitochondrion. Its subcellular location is the endoplasmic reticulum. Acts as a neurotrophic factor in postnatal mature neurons enhancing neuronal survival. Promotes cell proliferation and neurogenesis in undifferentiated neural progenitor cells at the embryonic stage and inhibits differentiation of astrocytes. Its neurotrophic activity is exerted via MAPK1/ERK2, MAPK3/ERK1 and AKT1/AKT pathways. Neurotrophic activity is enhanced by binding to heme. Also acts as an anorexigenic neurotrophic factor that contributes to energy balance. The chain is Neudesin from Rattus norvegicus (Rat).